The following is a 218-amino-acid chain: Elongation factor Ts (218 aa).

Positions 82–85 (TDFV) are involved in Mg(2+) ion dislocation from EF-Tu.

The protein belongs to the EF-Ts family.

It localises to the cytoplasm. Functionally, associates with the EF-Tu.GDP complex and induces the exchange of GDP to GTP. It remains bound to the aminoacyl-tRNA.EF-Tu.GTP complex up to the GTP hydrolysis stage on the ribosome. The protein is Elongation factor Ts of Prochlorococcus marinus (strain NATL1A).